Reading from the N-terminus, the 250-residue chain is MSVTPSIDAVRDLRAASCGPVGAPSVTSELSENIILTSLDDLHNWARLSSLWPLLYGTACCFIEFAALIGSRFDFDRFGLVPRSSPRQADLLIVAGTVTMKMAPALVRLYEQMPEPKYVIAMGACTITGGMFSADSTTAVRGVDKLIPVDLYLPGCPPRPEAIFDAVIKLRKKVGDESVSERIKIAQTHRYFTVPHQMKRVEPIVTGAYLSADTQKAALSPGAGLPMAAELNTSEIDASPASQPSSTYES.

[4Fe-4S] cluster contacts are provided by cysteine 60, cysteine 61, cysteine 125, and cysteine 156. Residues 230-250 (ELNTSEIDASPASQPSSTYES) are disordered. A compositionally biased stretch (polar residues) spans 231–250 (LNTSEIDASPASQPSSTYES).

The protein belongs to the complex I 20 kDa subunit family. NDH-1 can be composed of about 15 different subunits; different subcomplexes with different compositions have been identified which probably have different functions. [4Fe-4S] cluster is required as a cofactor.

Its subcellular location is the cellular thylakoid membrane. It catalyses the reaction a plastoquinone + NADH + (n+1) H(+)(in) = a plastoquinol + NAD(+) + n H(+)(out). It carries out the reaction a plastoquinone + NADPH + (n+1) H(+)(in) = a plastoquinol + NADP(+) + n H(+)(out). NDH-1 shuttles electrons from an unknown electron donor, via FMN and iron-sulfur (Fe-S) centers, to quinones in the respiratory and/or the photosynthetic chain. The immediate electron acceptor for the enzyme in this species is believed to be plastoquinone. Couples the redox reaction to proton translocation, and thus conserves the redox energy in a proton gradient. Cyanobacterial NDH-1 also plays a role in inorganic carbon-concentration. The protein is NAD(P)H-quinone oxidoreductase subunit K of Prochlorococcus marinus (strain MIT 9303).